Here is a 314-residue protein sequence, read N- to C-terminus: Cyclin-dependent kinase 2 (314 aa).

Residues 8-287 (FQRAEKIGEG…AKDALQHAYF (280 aa)) enclose the Protein kinase domain. Residues 14 to 22 (IGEGTYGIV) and Lys37 each bind ATP. Thr18 is subject to Phosphothreonine. Phosphotyrosine is present on Tyr19. Asp130 (proton acceptor) is an active-site residue. At Tyr162 the chain carries Phosphotyrosine. Position 163 is a phosphothreonine (Thr163).

Belongs to the protein kinase superfamily. CMGC Ser/Thr protein kinase family. CDC2/CDKX subfamily. Interacts with cyclin CycG.

The catalysed reaction is L-seryl-[protein] + ATP = O-phospho-L-seryl-[protein] + ADP + H(+). It carries out the reaction L-threonyl-[protein] + ATP = O-phospho-L-threonyl-[protein] + ADP + H(+). It catalyses the reaction [DNA-directed RNA polymerase] + ATP = phospho-[DNA-directed RNA polymerase] + ADP + H(+). Like Cdk1, could play a key role in the control of the eukaryotic cell cycle. The sequence is that of Cyclin-dependent kinase 2 from Drosophila melanogaster (Fruit fly).